Consider the following 503-residue polypeptide: Probable DNA double-strand break repair helicase HerA (503 aa).

Residues Arg122, 131 to 136, and 478 to 479 contribute to the ATP site; these read GGGKSN and KI.

This sequence belongs to the HerA family.

The catalysed reaction is Couples ATP hydrolysis with the unwinding of duplex DNA at the replication fork by translocating in the 5'-3' direction. This creates two antiparallel DNA single strands (ssDNA). The leading ssDNA polymer is the template for DNA polymerase III holoenzyme which synthesizes a continuous strand.. It catalyses the reaction ATP + H2O = ADP + phosphate + H(+). It carries out the reaction Couples ATP hydrolysis with the unwinding of duplex DNA by translocating in the 3'-5' direction.. Functionally, involved in DNA double-strand break (DSB) repair. Probably acts with NurA to stimulate resection of the 5' strand and produce the long 3' single-strand that is required for RadA loading. Has DNA-dependent ATPase activity and DNA helicase activity. The polypeptide is Probable DNA double-strand break repair helicase HerA (Methanocaldococcus jannaschii (strain ATCC 43067 / DSM 2661 / JAL-1 / JCM 10045 / NBRC 100440) (Methanococcus jannaschii)).